Here is a 287-residue protein sequence, read N- to C-terminus: Phosphatidylserine decarboxylase proenzyme (287 aa).

Catalysis depends on charge relay system; for autoendoproteolytic cleavage activity residues Asp-89, His-146, and Ser-252. The active-site Schiff-base intermediate with substrate; via pyruvic acid; for decarboxylase activity is the Ser-252. Residue Ser-252 is modified to Pyruvic acid (Ser); by autocatalysis.

It belongs to the phosphatidylserine decarboxylase family. PSD-B subfamily. Prokaryotic type I sub-subfamily. As to quaternary structure, heterodimer of a large membrane-associated beta subunit and a small pyruvoyl-containing alpha subunit. The cofactor is pyruvate. Is synthesized initially as an inactive proenzyme. Formation of the active enzyme involves a self-maturation process in which the active site pyruvoyl group is generated from an internal serine residue via an autocatalytic post-translational modification. Two non-identical subunits are generated from the proenzyme in this reaction, and the pyruvate is formed at the N-terminus of the alpha chain, which is derived from the carboxyl end of the proenzyme. The autoendoproteolytic cleavage occurs by a canonical serine protease mechanism, in which the side chain hydroxyl group of the serine supplies its oxygen atom to form the C-terminus of the beta chain, while the remainder of the serine residue undergoes an oxidative deamination to produce ammonia and the pyruvoyl prosthetic group on the alpha chain. During this reaction, the Ser that is part of the protease active site of the proenzyme becomes the pyruvoyl prosthetic group, which constitutes an essential element of the active site of the mature decarboxylase.

The protein resides in the cell membrane. It carries out the reaction a 1,2-diacyl-sn-glycero-3-phospho-L-serine + H(+) = a 1,2-diacyl-sn-glycero-3-phosphoethanolamine + CO2. It participates in phospholipid metabolism; phosphatidylethanolamine biosynthesis; phosphatidylethanolamine from CDP-diacylglycerol: step 2/2. In terms of biological role, catalyzes the formation of phosphatidylethanolamine (PtdEtn) from phosphatidylserine (PtdSer). This chain is Phosphatidylserine decarboxylase proenzyme, found in Shewanella amazonensis (strain ATCC BAA-1098 / SB2B).